Reading from the N-terminus, the 59-residue chain is Small, acid-soluble spore protein H (59 aa).

This sequence belongs to the SspH family.

Its subcellular location is the spore core. This chain is Small, acid-soluble spore protein H, found in Bacillus licheniformis (strain ATCC 14580 / DSM 13 / JCM 2505 / CCUG 7422 / NBRC 12200 / NCIMB 9375 / NCTC 10341 / NRRL NRS-1264 / Gibson 46).